The primary structure comprises 368 residues: Proline-rich protein 5-like (368 aa).

Ser28 is modified (phosphoserine). Residues 312-368 are disordered; it reads LGEESGGEDKCLLLQPSFPPPHRQCSSEPNITDGPDEPEQGATGSQEDSELNCASLS. A compositionally biased stretch (polar residues) spans 353–368; the sequence is ATGSQEDSELNCASLS.

This sequence belongs to the PROTOR family. In terms of assembly, interacts with the mammalian target of rapamycin complex 2 (mTORC2) which contains MTOR, MLST8, PRR5, RICTOR, MAPKAP1 and DEPTOR. Interacts with RFFL. Interacts (via C-terminus) with ZFP36 (via C-terminus); this interaction may accelerate ZFP36-mediated mRNA decay during stress. Interacts with RICTOR. In terms of processing, ubiquitinated. Ubiquitination by RFFL promotes proteasomal degradation of PRR5L thereby modifying the substrate-specific activity of the mTORC2 complex. Ubiquitination by RFFL is stimulated by LPA/lysophosphatidic acid.

Associates with the mTORC2 complex that regulates cellular processes including survival and organization of the cytoskeleton. Regulates the activity of the mTORC2 complex in a substrate-specific manner preventing for instance the specific phosphorylation of PKCs and thereby controlling cell migration. Plays a role in the stimulation of ZFP36-mediated mRNA decay of several ZFP36-associated mRNAs, such as TNF-alpha and GM-CSF, in response to stress. Required for ZFP36 localization to cytoplasmic stress granule (SG) and P-body (PB) in response to stress. The polypeptide is Proline-rich protein 5-like (PRR5L) (Bos taurus (Bovine)).